A 90-amino-acid polypeptide reads, in one-letter code: Conotoxin TxMMSK-06 (90 aa).

The first 22 residues, 1-22, serve as a signal peptide directing secretion; that stretch reads MMSKLGVLLTICLLLFPHTAVP. A propeptide spanning residues 23–74 is cleaved from the precursor; that stretch reads LDGDQHADQPAERLQDDISSEHHPMLNSIRRREQNQFMSFTSVKLRDSRGER. The interval 24–43 is disordered; sequence DGDQHADQPAERLQDDISSE. A compositionally biased stretch (basic and acidic residues) spans 25-43; sequence GDQHADQPAERLQDDISSE. Intrachain disulfides connect C75-C89, C76-C85, and C81-C88. Position 87 is a 4-hydroxyproline (P87). C89 bears the Cysteine amide mark.

This sequence belongs to the conotoxin M superfamily. In terms of tissue distribution, expressed by the venom duct.

The protein resides in the secreted. The polypeptide is Conotoxin TxMMSK-06 (Conus textile (Cloth-of-gold cone)).